Here is a 251-residue protein sequence, read N- to C-terminus: D-aminoacyl-tRNA deacylase (251 aa).

The protein belongs to the DtdA deacylase family. As to quaternary structure, monomer. Requires Zn(2+) as cofactor.

It catalyses the reaction a D-aminoacyl-tRNA + H2O = a tRNA + a D-alpha-amino acid + H(+). It carries out the reaction glycyl-tRNA(Ala) + H2O = tRNA(Ala) + glycine + H(+). Functionally, D-aminoacyl-tRNA deacylase with broad substrate specificity. By recycling D-aminoacyl-tRNA to D-amino acids and free tRNA molecules, this enzyme counteracts the toxicity associated with the formation of D-aminoacyl-tRNA entities in vivo. This Pyrobaculum calidifontis (strain DSM 21063 / JCM 11548 / VA1) protein is D-aminoacyl-tRNA deacylase.